A 546-amino-acid chain; its full sequence is MSKVITFSEDARTHILKGVNTLANAVKVTLGPKGRNVVIDKSFGSPLITKDGVTVAKEIELENKFENMGAQMVKEVASKTNDEAGDGTTTATVLAQAIYREGAKLVSAGHNPMSIKRGIDKAVGIIIEELKSMSKPVKGSNEVAQVGAISANNDKEIGQMLADAMDKVGREGVITIEESKTAKTEVTVVEGMQFDRGYLSPYFVTNAERMEAVLENAYVLVYDKKISSMKDMIGILEGVAKQGRQLLIIAEDVEGEALATLVVNKLRGTLHIAAVKAPGFGDRRKAMLEDIAILTGAKVISEDVGLKLEAATVADLGVAKRIVVDKDNTTIIDGAGKKNDINGRVGQIKAQIEETSSDYDKEKLKERLAKLAGGVAVIHVGAPSEVEMKEKKHRVEDALNATRAAVEEGIVAGGGTALLRASTKIDKSKFSEEEQFGATIIKRACEEPIRQIAANAGLDGAIVLDRILQNKSTTWGFNAYSDEYTDLIKDGVIDPVKVVRCALTNAASVSSLMLTTETMIAEAPKKESAAPAMPGHDGMGGMGGMM.

ATP contacts are provided by residues 29–32 (TLGP), lysine 50, 86–90 (DGTTT), glycine 414, and aspartate 494. Residues 525 to 546 (KKESAAPAMPGHDGMGGMGGMM) are disordered. The span at 537–546 (DGMGGMGGMM) shows a compositional bias: gly residues.

It belongs to the chaperonin (HSP60) family. As to quaternary structure, forms a cylinder of 14 subunits composed of two heptameric rings stacked back-to-back. Interacts with the co-chaperonin GroES.

The protein resides in the cytoplasm. The catalysed reaction is ATP + H2O + a folded polypeptide = ADP + phosphate + an unfolded polypeptide.. Functionally, together with its co-chaperonin GroES, plays an essential role in assisting protein folding. The GroEL-GroES system forms a nano-cage that allows encapsulation of the non-native substrate proteins and provides a physical environment optimized to promote and accelerate protein folding. The chain is Chaperonin GroEL from Bdellovibrio bacteriovorus (strain ATCC 15356 / DSM 50701 / NCIMB 9529 / HD100).